Here is a 246-residue protein sequence, read N- to C-terminus: Small ribosomal subunit protein uS2 (246 aa).

It belongs to the universal ribosomal protein uS2 family. Component of the small ribosomal subunit. Mature ribosomes consist of a small (40S) and a large (60S) subunit. The 40S subunit contains about 33 different proteins and 1 molecule of RNA (18S). The 60S subunit contains about 49 different proteins and 3 molecules of RNA (25S, 5.8S and 5S). Interacts with ribosomal protein S21.

Its subcellular location is the cytoplasm. In terms of biological role, required for the assembly and/or stability of the 40S ribosomal subunit. Required for the processing of the 20S rRNA-precursor to mature 18S rRNA in a late step of the maturation of 40S ribosomal subunits. This Leishmania infantum protein is Small ribosomal subunit protein uS2.